Reading from the N-terminus, the 141-residue chain is Hemoglobin subunit alpha-D (141 aa).

In terms of domain architecture, Globin spans 1–141; the sequence is MLSADDKKII…VAAVLAEKYR (141 aa). Residues histidine 58 and histidine 87 each contribute to the heme b site.

It belongs to the globin family. Heterotetramer of two alpha-D chains and two beta chains. As to expression, red blood cells.

Functionally, involved in oxygen transport from the lung to the various peripheral tissues. In Anser indicus (Bar-headed goose), this protein is Hemoglobin subunit alpha-D (HBAD).